The primary structure comprises 122 residues: Large ribosomal subunit protein uL14 (122 aa).

The protein belongs to the universal ribosomal protein uL14 family. As to quaternary structure, part of the 50S ribosomal subunit. Forms a cluster with proteins L3 and L19. In the 70S ribosome, L14 and L19 interact and together make contacts with the 16S rRNA in bridges B5 and B8.

Functionally, binds to 23S rRNA. Forms part of two intersubunit bridges in the 70S ribosome. The protein is Large ribosomal subunit protein uL14 of Nautilia profundicola (strain ATCC BAA-1463 / DSM 18972 / AmH).